Consider the following 710-residue polypeptide: Pentatricopeptide repeat-containing protein At5g39680 (710 aa).

Serine 2 bears the N-acetylserine mark. 14 PPR repeats span residues 35-64 (NELLKVCANSSYLRIGESIHAHLIVTNQSS), 68-98 (DAYQINSLINLYVKCRETVRARKLFDLMPER), 99-133 (NVVSWCAMMKGYQNSGFDFEVLKLFKSMFFSGESR), 135-169 (NEFVATVVFKSCSNSGRIEEGKQFHGCFLKYGLIS), 170-200 (HEFVRNTLVYMYSLCSGNGEAIRVLDDLPYC), 201-235 (DLSVFSSALSGYLECGAFKEGLDVLRKTANEDFVW), 236-270 (NNLTYLSSLRLFSNLRDLNLALQVHSRMVRFGFNA), 271-301 (EVEACGALINMYGKCGKVLYAQRVFDDTHAQ), 302-336 (NIFLNTTIMDAYFQDKSFEEALNLFSKMDTKEVPP), 337-371 (NEYTFAILLNSIAELSLLKQGDLLHGLVLKSGYRN), 372-402 (HVMVGNALVNMYAKSGSIEDARKAFSGMTFR), 403-437 (DIVTWNTMISGCSHHGLGREALEAFDRMIFTGEIP), 438-473 (NRITFIGVLQACSHIGFVEQGLHYFNQLMKKFDVQP), and 474-504 (DIQHYTCIVGLLSKAGMFKDAEDFMRTAPIE). The segment at 509–584 (AWRTLLNACY…EPGVSWIGIR (76 aa)) is type E motif. The segment at 585–615 (NQTHVFLAEDNQHPEITLIYAKVKEVMSKIK) is type E(+) motif. Residues 616-710 (PLGYSPDVAG…DGQCSCCDYW (95 aa)) are type DYW motif.

Belongs to the PPR family. PCMP-H subfamily.

The sequence is that of Pentatricopeptide repeat-containing protein At5g39680 (EMB2744) from Arabidopsis thaliana (Mouse-ear cress).